We begin with the raw amino-acid sequence, 226 residues long: Transmembrane protein 204 (226 aa).

Residues 1 to 5 (MTVRK) are Cytoplasmic-facing. Residues 6–26 (VVATAVLVALVSLVLNNAAAF) traverse the membrane as a helical segment. Topologically, residues 27–103 (TPNWVYQTLE…LQFDMMRACN (77 aa)) are extracellular. Residues 104-124 (LVATAALAAGQLTFVLGLTGL) traverse the membrane as a helical segment. Residues 125 to 136 (PLLSPDAQCWEE) lie on the Cytoplasmic side of the membrane. A helical transmembrane segment spans residues 137–157 (AMAAAFQLASFVLVIGLVTFY). Residues 158–170 (RIGPYTSLSWSCY) lie on the Extracellular side of the membrane. The helical transmembrane segment at 171–191 (LNIGACLLATLAAAMLIWNVL) threads the bilayer. At 192–226 (HRREDCTAPRVIVISRSLTARFRRGLDNDYVESPC) the chain is on the cytoplasmic side.

The protein resides in the cell junction. Its subcellular location is the adherens junction. It is found in the cell membrane. Can influence paracellular permeability. Appears to be involved in cell-cell interactions through adherens. The polypeptide is Transmembrane protein 204 (TMEM204) (Bos taurus (Bovine)).